The sequence spans 615 residues: Matrix metalloproteinase-25 (615 aa).

Residues 1-162 constitute a propeptide that is removed on maturation; the sequence is MCFPGSQISP…AAGLVRRRRR (162 aa). The chain crosses the membrane as a helical span at residues 53–73; sequence ILRLPAFGLPLLALLLVPLLP. The Cysteine switch motif lies at 143–150; the sequence is PRCSLPDV. Zn(2+) is bound by residues cysteine 145 and histidine 287. Glutamate 288 is a catalytic residue. Zn(2+)-binding residues include histidine 291 and histidine 297. The disordered stretch occupies residues 336–366; sequence VSQNPNARPTRKPLVPPPQPPAMPPDSPATP. The span at 349-366 shows a compositional bias: pro residues; the sequence is LVPPPQPPAMPPDSPATP. Hemopexin repeat units lie at residues 368–417, 421–466, 467–515, and 516–562; these read PDRC…WEGL, VKVI…GLPP, GEDV…DGAP, and FAPD…WLDC. An intrachain disulfide couples cysteine 371 to cysteine 562. A disordered region spans residues 547 to 582; it reads AESDSPQPIGPKWLDCPAPNSDPRVTSPPKTTSKTR. Residue alanine 593 is the site of GPI-anchor amidated alanine attachment. A propeptide spans 594–615 (removed in mature form); it reads SEQLSPLLLPLLPLVAGEVFSY.

This sequence belongs to the peptidase M10A family. Requires Zn(2+) as cofactor. Ca(2+) serves as cofactor. In terms of processing, the precursor is cleaved by a furin endopeptidase.

The protein localises to the cell membrane. Its function is as follows. May activate progelatinase A. This Mus musculus (Mouse) protein is Matrix metalloproteinase-25 (Mmp25).